A 122-amino-acid polypeptide reads, in one-letter code: Small ribosomal subunit protein uS13 (122 aa).

The interval 99–122 (RGQRTHTNARTRKGPAKAIAGKKK) is disordered.

The protein belongs to the universal ribosomal protein uS13 family. Part of the 30S ribosomal subunit. Forms a loose heterodimer with protein S19. Forms two bridges to the 50S subunit in the 70S ribosome.

Located at the top of the head of the 30S subunit, it contacts several helices of the 16S rRNA. In the 70S ribosome it contacts the 23S rRNA (bridge B1a) and protein L5 of the 50S subunit (bridge B1b), connecting the 2 subunits; these bridges are implicated in subunit movement. Contacts the tRNAs in the A and P-sites. In Sinorhizobium medicae (strain WSM419) (Ensifer medicae), this protein is Small ribosomal subunit protein uS13.